The following is a 229-amino-acid chain: Endonuclease V (229 aa).

The protein belongs to the endonuclease V family.

The protein resides in the cytoplasm. The enzyme catalyses Endonucleolytic cleavage at apurinic or apyrimidinic sites to products with a 5'-phosphate.. Functionally, DNA repair enzyme involved in the repair of deaminated bases. Selectively cleaves double-stranded DNA at the second phosphodiester bond 3' to a deoxyinosine leaving behind the intact lesion on the nicked DNA. The sequence is that of Endonuclease V from Methanopyrus kandleri (strain AV19 / DSM 6324 / JCM 9639 / NBRC 100938).